The primary structure comprises 279 residues: 3-methyl-2-oxobutanoate hydroxymethyltransferase (279 aa).

The Mg(2+) site is built by Asp44 and Asp83. 3-methyl-2-oxobutanoate contacts are provided by residues 44-45 (DS), Asp83, and Lys112. Glu114 contacts Mg(2+). Glu181 functions as the Proton acceptor in the catalytic mechanism.

It belongs to the PanB family. In terms of assembly, homodecamer; pentamer of dimers. It depends on Mg(2+) as a cofactor.

The protein resides in the cytoplasm. The catalysed reaction is 3-methyl-2-oxobutanoate + (6R)-5,10-methylene-5,6,7,8-tetrahydrofolate + H2O = 2-dehydropantoate + (6S)-5,6,7,8-tetrahydrofolate. Its pathway is cofactor biosynthesis; coenzyme A biosynthesis. In terms of biological role, catalyzes the reversible reaction in which hydroxymethyl group from 5,10-methylenetetrahydrofolate is transferred onto alpha-ketoisovalerate to form ketopantoate. The sequence is that of 3-methyl-2-oxobutanoate hydroxymethyltransferase from Nitrosopumilus maritimus (strain SCM1).